The chain runs to 106 residues: Large ribosomal subunit protein eL42 (106 aa).

Residues Tyr-34 to Lys-53 are disordered.

Belongs to the eukaryotic ribosomal protein eL42 family. Component of the large ribosomal subunit.

The protein localises to the cytoplasm. Functionally, component of the large ribosomal subunit. The ribosome is a large ribonucleoprotein complex responsible for the synthesis of proteins in the cell. In Canis lupus familiaris (Dog), this protein is Large ribosomal subunit protein eL42 (Rpl36a).